The chain runs to 668 residues: Golgin subfamily A member 6-like protein 1 (668 aa).

Disordered stretches follow at residues 1–120 (MLMW…HQEA), 323–356 (IREQEEKIREQEEKMRRQEEMMWEKEEKMRRQEE), 384–466 (EKMH…EMWR), 481–591 (KEKM…REQE), and 603–639 (EQEEMMQEQEEKMWEQEEKMCEQEEKMQEQEEKMRRQ). Residues 15–41 (LPTHPHLPTHPHLPTHPHLPTHPHLPT) are compositionally biased toward basic residues. Residues 51-72 (MSKETRQSKLAEAKEQLTDHHP) show a composition bias toward basic and acidic residues. Polar residues-rich tracts occupy residues 73–83 (QTNPSVGTAAS) and 91–103 (NNGTNPETTTSGG). Residues 106–120 (SPEDEQKASHQHQEA) are compositionally biased toward basic and acidic residues. Residues 177–663 (LEQALSAVAT…EEKMQEHQEH (487 aa)) are a coiled coil.

This sequence belongs to the GOLGA6 family.

The chain is Golgin subfamily A member 6-like protein 1 (GOLGA6L1) from Homo sapiens (Human).